The sequence spans 189 residues: Small ribosomal subunit protein uS5 (189 aa).

In terms of domain architecture, S5 DRBM spans 22-85 (FVDKLVAINR…EAAKRDLIFV (64 aa)).

The protein belongs to the universal ribosomal protein uS5 family. Part of the 30S ribosomal subunit. Contacts proteins S4 and S8.

In terms of biological role, with S4 and S12 plays an important role in translational accuracy. Located at the back of the 30S subunit body where it stabilizes the conformation of the head with respect to the body. The chain is Small ribosomal subunit protein uS5 from Sinorhizobium medicae (strain WSM419) (Ensifer medicae).